The following is a 78-amino-acid chain: Small ribosomal subunit protein eS21 (78 aa).

The protein belongs to the eukaryotic ribosomal protein eS21 family.

In Dictyostelium discoideum (Social amoeba), this protein is Small ribosomal subunit protein eS21 (rps21).